The primary structure comprises 1154 residues: PAN2-PAN3 deadenylation complex catalytic subunit pan2 (1154 aa).

3 WD repeats span residues 20-59, 102-145, and 276-315; these read GLPT…RYTS, THDE…DKLR, and ATVS…HFNE. A linker region spans residues 316-451; that stretch reads MSKEVEFADV…GARISGESED (136 aa). The USP domain occupies 452 to 821; it reads DPLLKYSNVE…SPCVLAFQVR (370 aa). Residues 870–1048 enclose the Exonuclease domain; it reads VALDTEFVDL…IEDARMALRL (179 aa). The a divalent metal cation site is built by Asp873, Glu875, Asp982, and Asp1041. A disordered region spans residues 1092–1154; sequence PGTAVTMQNN…GEFFTGSPLK (63 aa). Polar residues-rich tracts occupy residues 1096–1109 and 1132–1141; these read VTMQ…TPST and LTPSNGTFSG.

The protein belongs to the peptidase C19 family. PAN2 subfamily. In terms of assembly, forms a heterotrimer with an asymmetric homodimer of the regulatory subunit pan3 to form the poly(A)-nuclease (PAN) deadenylation complex. Requires a divalent metal cation as cofactor.

The protein localises to the cytoplasm. The enzyme catalyses Exonucleolytic cleavage of poly(A) to 5'-AMP.. Positively regulated by the regulatory subunit pan3. Functionally, catalytic subunit of the poly(A)-nuclease (PAN) deadenylation complex, one of two cytoplasmic mRNA deadenylases involved in mRNA turnover. PAN specifically shortens poly(A) tails of RNA and the activity is stimulated by poly(A)-binding protein pab1. PAN deadenylation is followed by rapid degradation of the shortened mRNA tails by the CCR4-NOT complex. Deadenylated mRNAs are then degraded by two alternative mechanisms, namely exosome-mediated 3'-5' exonucleolytic degradation, or deadenylation-dependent mRNA decaping and subsequent 5'-3' exonucleolytic degradation by xrn1. May also be involved in post-transcriptional maturation of mRNA poly(A) tails. The polypeptide is PAN2-PAN3 deadenylation complex catalytic subunit pan2 (Emericella nidulans (strain FGSC A4 / ATCC 38163 / CBS 112.46 / NRRL 194 / M139) (Aspergillus nidulans)).